The chain runs to 266 residues: Ribosomal RNA small subunit methyltransferase A (266 aa).

The S-adenosyl-L-methionine site is built by asparagine 10, isoleucine 12, glycine 37, glutamate 58, aspartate 82, and asparagine 105.

This sequence belongs to the class I-like SAM-binding methyltransferase superfamily. rRNA adenine N(6)-methyltransferase family. RsmA subfamily.

Its subcellular location is the cytoplasm. The catalysed reaction is adenosine(1518)/adenosine(1519) in 16S rRNA + 4 S-adenosyl-L-methionine = N(6)-dimethyladenosine(1518)/N(6)-dimethyladenosine(1519) in 16S rRNA + 4 S-adenosyl-L-homocysteine + 4 H(+). In terms of biological role, specifically dimethylates two adjacent adenosines (A1518 and A1519) in the loop of a conserved hairpin near the 3'-end of 16S rRNA in the 30S particle. May play a critical role in biogenesis of 30S subunits. This Mycoplasma mycoides subsp. mycoides SC (strain CCUG 32753 / NCTC 10114 / PG1) protein is Ribosomal RNA small subunit methyltransferase A.